The following is a 1145-amino-acid chain: DNA mismatch repair protein msh-3 (1145 aa).

Disordered stretches follow at residues 1-183 and 857-879; these read MAGP…GAKT and SSSASSPDPNPTSPSGKPALAQL. The segment covering 13–33 has biased composition (polar residues); the sequence is ASISSFFTPRNTSPLVNLSQN. Positions 121-131 are enriched in basic and acidic residues; sequence AERKKKEELHR. Residues 158–169 show a composition bias toward acidic residues; it reads GEGEEGEDDEEE. The interval 183-307 is mispair-binding domain; the sequence is TGKLTPMELQ…RKLTNVYTKG (125 aa). 882-889 contributes to the ATP binding site; the sequence is GPNMGGKS. The segment at 1030–1056 is disordered; the sequence is KSRTSMDDDAMEVDGDGDGQEGAGADK. Over residues 1036-1048 the composition is skewed to acidic residues; the sequence is DDDAMEVDGDGDG.

Belongs to the DNA mismatch repair MutS family. MSH3 subfamily. Heterodimer consisting of msh-2-msh-3 (MutS beta). Forms a ternary complex with MutL alpha (mlh-1-pms-1).

The protein resides in the nucleus. In terms of biological role, component of the post-replicative DNA mismatch repair system (MMR). Heterodimerizes with msh-2 to form MutS beta, which binds to DNA mismatches thereby initiating DNA repair. Msh-3 provides substrate-binding and substrate specificity to the complex. When bound, the MutS beta heterodimer bends the DNA helix and shields approximately 20 base pairs. Acts mainly to repair insertion-deletion loops (IDLs) from 2 to 13 nucleotides in size, but can also repair base-base and single insertion-deletion mismatches that occur during replication. After mismatch binding, forms a ternary complex with the MutL alpha heterodimer, which is thought to be responsible for directing the downstream MMR events, including strand discrimination, excision, and resynthesis. ATP binding and hydrolysis play a pivotal role in mismatch repair functions. The polypeptide is DNA mismatch repair protein msh-3 (msh-3) (Neurospora crassa (strain ATCC 24698 / 74-OR23-1A / CBS 708.71 / DSM 1257 / FGSC 987)).